The following is a 380-amino-acid chain: Coiled-coil domain-containing protein 74B (380 aa).

Disordered stretches follow at residues 1 to 51 (MSGA…KRNL), 89 to 108 (LIMN…HLSR), and 128 to 202 (GGPS…DVPQ). Polar residues predominate over residues 34–44 (LRPQSPQLRQS). Residues 47–93 (QKRNLDLEKSLQFLQQQHSEMLAKLHEEIEHLKRENKDLRYKLIMNQ) are a coiled coil. Residues 141–151 (RTHRPGGKHGR) are compositionally biased toward basic residues. Residues 165-182 (DSLSTSSFQSVKSISNSG) show a composition bias toward polar residues.

The chain is Coiled-coil domain-containing protein 74B (CCDC74B) from Homo sapiens (Human).